The following is a 249-amino-acid chain: Uridylate kinase (249 aa).

23–26 (KISG) contributes to the ATP binding site. Residues 31–36 (GDQGFG) are involved in allosteric activation by GTP. G65 contacts UMP. The ATP site is built by G66 and R70. UMP contacts are provided by residues D85 and 146–153 (TGNPYFTT). Residues T173, Y179, and D182 each coordinate ATP.

It belongs to the UMP kinase family. Homohexamer.

It is found in the cytoplasm. It carries out the reaction UMP + ATP = UDP + ADP. It functions in the pathway pyrimidine metabolism; CTP biosynthesis via de novo pathway; UDP from UMP (UMPK route): step 1/1. Its activity is regulated as follows. Allosterically activated by GTP. Inhibited by UTP. In terms of biological role, catalyzes the reversible phosphorylation of UMP to UDP. This Jannaschia sp. (strain CCS1) protein is Uridylate kinase.